Consider the following 560-residue polypeptide: DNA ligase B (560 aa).

Catalysis depends on Lys124, which acts as the N6-AMP-lysine intermediate.

The protein belongs to the NAD-dependent DNA ligase family. LigB subfamily.

The catalysed reaction is NAD(+) + (deoxyribonucleotide)n-3'-hydroxyl + 5'-phospho-(deoxyribonucleotide)m = (deoxyribonucleotide)n+m + AMP + beta-nicotinamide D-nucleotide.. In terms of biological role, catalyzes the formation of phosphodiester linkages between 5'-phosphoryl and 3'-hydroxyl groups in double-stranded DNA using NAD as a coenzyme and as the energy source for the reaction. The sequence is that of DNA ligase B from Escherichia coli O81 (strain ED1a).